The sequence spans 339 residues: Putative agmatine deiminase (339 aa).

The active-site Amidino-cysteine intermediate is Cys331.

This sequence belongs to the agmatine deiminase family.

It catalyses the reaction agmatine + H2O = N-carbamoylputrescine + NH4(+). The chain is Putative agmatine deiminase from Streptomyces coelicolor (strain ATCC BAA-471 / A3(2) / M145).